The sequence spans 95 residues: Mitochondrial import inner membrane translocase subunit Tim13 (95 aa).

A Twin CX3C motif motif is present at residues 46 to 69 (CFKKCIGKPGSTLDNSEQKCIAMC). 2 cysteine pairs are disulfide-bonded: cysteine 46/cysteine 69 and cysteine 50/cysteine 65.

It belongs to the small Tim family. In terms of assembly, heterohexamer; composed of 3 copies of TIMM8 (TIMM8A or TIMM8B) and 3 copies of TIMM13, named soluble 70 kDa complex. Associates with the TIM22 complex, whose core is composed of TIMM22.

The protein resides in the mitochondrion inner membrane. Its function is as follows. Mitochondrial intermembrane chaperone that participates in the import and insertion of some multi-pass transmembrane proteins into the mitochondrial inner membrane. Also required for the transfer of beta-barrel precursors from the TOM complex to the sorting and assembly machinery (SAM complex) of the outer membrane. Acts as a chaperone-like protein that protects the hydrophobic precursors from aggregation and guide them through the mitochondrial intermembrane space. The TIMM8-TIMM13 complex mediates the import of some proteins while the predominant TIMM9-TIMM10 70 kDa complex mediates the import of much more proteins. The protein is Mitochondrial import inner membrane translocase subunit Tim13 (timm13) of Danio rerio (Zebrafish).